A 191-amino-acid polypeptide reads, in one-letter code: MQVLRNSGSWLLLSWAGHGMTRFVGIAPAKNIHTGAPRLEDSAARQNTEREAAPSRFSLYPPVPGQESSLQWAGMKFEDVPIAHIKATYNNTQIQVVSATNASLARASCGTEGFRNAKKGTGIAAQTAGIAAAAKATGKGVTHIRVVVKGMGPGRWSAIKGLTMGGLEVISITDNTPVPHNGCRPRKARRL.

A disordered region spans residues 37–62; it reads PRLEDSAARQNTEREAAPSRFSLYPP. A compositionally biased stretch (basic and acidic residues) spans 38–53; the sequence is RLEDSAARQNTEREAA.

The protein belongs to the universal ribosomal protein uS11 family. As to quaternary structure, component of the mitochondrial ribosome small subunit (28S) which comprises a 12S rRNA and about 30 distinct proteins.

Its subcellular location is the mitochondrion. The protein is Small ribosomal subunit protein uS11m (Mrps11) of Mus musculus (Mouse).